The chain runs to 155 residues: MNKENKSKLEALLEKVANERDLEICGLNIQTNQNPVVIEITIRKTNGDDISLDDCALFNTPASDEIEKSNLLNCSYVLEISSQGVSDELTSERDFKTFKGFPVNVELNQKNSKIKILNGLLYEKSKDYLAINIKGKIKKIPFDEVLKISLCTLKD.

Belongs to the RimP family.

The protein localises to the cytoplasm. Functionally, required for maturation of 30S ribosomal subunits. This Prochlorococcus marinus (strain AS9601) protein is Ribosome maturation factor RimP.